Here is a 459-residue protein sequence, read N- to C-terminus: Heat stress transcription factor A-4d (459 aa).

A coiled-coil region spans residues 127 to 189; the sequence is AESERRELEE…QKNIVASLCE (63 aa). The interval 141–191 is hydrophobic repeat HR-A/B; it reads LKYEKSILVADLQRQNQQQYVINWQMQAMEGRLVAMEQRQKNIVASLCEML. The Nuclear localization signal motif lies at 209 to 213; that stretch reads SKKRR. Residues 364–388 show a composition bias toward polar residues; that stretch reads YPTQADVNSEIASSTDTSQDGTSET. The disordered stretch occupies residues 364–398; it reads YPTQADVNSEIASSTDTSQDGTSETEASHGPTNDV. The AHA motif lies at 397–406; it reads DVFWERFLTE.

It belongs to the HSF family. Class A subfamily. Homotrimer. Exhibits temperature-dependent phosphorylation.

The protein localises to the nucleus. Its function is as follows. Transcriptional regulator that specifically binds DNA of heat shock promoter elements (HSE). The protein is Heat stress transcription factor A-4d (HSFA4D) of Oryza sativa subsp. japonica (Rice).